A 491-amino-acid polypeptide reads, in one-letter code: Probable Xaa-Pro aminopeptidase AFLA_084750 (491 aa).

D271, D282, E419, and E458 together coordinate Mn(2+).

It belongs to the peptidase M24B family. Mn(2+) serves as cofactor.

It catalyses the reaction Release of any N-terminal amino acid, including proline, that is linked to proline, even from a dipeptide or tripeptide.. In terms of biological role, catalyzes the removal of a penultimate prolyl residue from the N-termini of peptides. This Aspergillus flavus (strain ATCC 200026 / FGSC A1120 / IAM 13836 / NRRL 3357 / JCM 12722 / SRRC 167) protein is Probable Xaa-Pro aminopeptidase AFLA_084750.